Reading from the N-terminus, the 364-residue chain is Fructose-bisphosphate aldolase B (364 aa).

Ala2 bears the N-acetylalanine mark. Lys13 carries the post-translational modification N6-succinyllysine. Ser36 carries the phosphoserine modification. Position 39 is a phosphothreonine (Thr39). Position 43 (Arg43) interacts with beta-D-fructose 1,6-bisphosphate. Ser89 is modified (phosphoserine). Thr119 carries the post-translational modification Phosphothreonine. The residue at position 121 (Lys121) is an N6-succinyllysine. Ser132 is subject to Phosphoserine. The Proton acceptor role is filled by Glu188. Residue Lys230 is the Schiff-base intermediate with dihydroxyacetone-P of the active site. 4 positions are modified to phosphoserine: Ser272, Ser276, Ser299, and Ser301. 272 to 274 is a beta-D-fructose 1,6-bisphosphate binding site; it reads SGG. Arg304 contributes to the beta-D-fructose 1,6-bisphosphate binding site. Ser309 carries the post-translational modification Phosphoserine. Lys317 is modified (N6-succinyllysine).

Belongs to the class I fructose-bisphosphate aldolase family. In terms of assembly, homotetramer. Interacts with BBS1, BBS2, BBS4 and BBS7. Forms a ternary complex with G6PD and TP53; this interaction is direct.

The protein resides in the cytoplasm. Its subcellular location is the cytosol. It is found in the cytoskeleton. It localises to the microtubule organizing center. The protein localises to the centrosome. The protein resides in the centriolar satellite. It carries out the reaction beta-D-fructose 1,6-bisphosphate = D-glyceraldehyde 3-phosphate + dihydroxyacetone phosphate. The catalysed reaction is beta-D-fructose 1-phosphate = D-glyceraldehyde + dihydroxyacetone phosphate. Its pathway is carbohydrate degradation; glycolysis; D-glyceraldehyde 3-phosphate and glycerone phosphate from D-glucose: step 4/4. It functions in the pathway carbohydrate biosynthesis; gluconeogenesis. The protein operates within carbohydrate metabolism; fructose metabolism. In terms of biological role, catalyzes the aldol cleavage of fructose 1,6-biphosphate to form two triosephosphates dihydroxyacetone phosphate and D-glyceraldehyde 3-phosphate in glycolysis as well as the reverse stereospecific aldol addition reaction in gluconeogenesis. In fructolysis, metabolizes fructose 1-phosphate derived from the phosphorylation of dietary fructose by fructokinase into dihydroxyacetone phosphate and D-glyceraldehyde. Acts as an adapter independently of its enzymatic activity, exerts a tumor suppressor role by stabilizing the ternary complex with G6PD and TP53 to inhibit G6PD activity and keep oxidative pentose phosphate metabolism in check. This chain is Fructose-bisphosphate aldolase B (ALDOB), found in Pongo abelii (Sumatran orangutan).